Here is a 705-residue protein sequence, read N- to C-terminus: MGDESNTLRVLVATDCHLGYMEKDEIRRFDSFEAFEEICSLAEQNKVDFVLLGGDLFHENKPSRSTLVKTIEILRRYCLNDQPVKFQVVSDQTINFPNRFGQVNYEDPNFNVGLPVFTIHGNHDDPAGVDNLSAIDILSACNLVNYFGKMDLGGSGVGEIAVYPVLVKKGTTFVALYGLGNIRDERLNRMFQTPHAVQWMRPETQDGMSVSDWFNILVLHQNRIKTNPKSAINEHFLPRFLDFIVWGHEHECLIDPQEVPGMGFHITQPGSSVATSLIDGEAKPKHVLLLEIKGNQYRPTKIPLRSVRPFHYAEVVLKDEVDVDPNDQASVLEHLDKIVRNLIKKSSQPTASRPETKLPLIRIKVDYSGFSTINPQRFGQKYVGKVANPQDILIFSKSAKKRQTTGVGNIDDSEKLRPEELNQQTIEALVAENNLKMEILPVDDLDIALHDFVSKDDKMAFYACLQRNLEETRTKLNSEADKFKIEEEDIIVKVGECMQERVKERSLRSKEDSRFTSSSQNLDTGGRSVTAQSNLNSFSDDEDTREMLLGARTTNAGRKASGFTRPSKDATDVAKTGTSRRGRGRGTASMKQTTLNFSQSRSSAAIRSEEVQSSSDEENETNEANEVVESSEPEESPQQTGRKRAAPRGGRGRGRGATAKRGRKADISSIQSMLMSKDDDDDDEDDRPKKPPPRVTRNYGAVRRR.

Positions 15, 17, 55, and 122 each coordinate Mn(2+). The Proton donor role is filled by H123. Mn(2+) is bound by residues H220, H248, and H250. The span at 505–514 shows a compositional bias: basic and acidic residues; the sequence is RSLRSKEDSR. Positions 505-705 are disordered; sequence RSLRSKEDSR…TRNYGAVRRR (201 aa). 2 stretches are compositionally biased toward polar residues: residues 515 to 538 and 589 to 605; these read FTSS…LNSF and SMKQ…SSAA. Over residues 641 to 663 the composition is skewed to basic residues; that stretch reads GRKRAAPRGGRGRGRGATAKRGR.

The protein belongs to the MRE11/RAD32 family. As to quaternary structure, component of the MRN complex composed of two heterodimers RAD50/MRE11 associated with a single NBS1. Mn(2+) serves as cofactor.

It is found in the nucleus. Its subcellular location is the chromosome. In terms of biological role, core component of the MRN complex, which plays a central role in double-strand break (DSB) repair, DNA recombination, maintenance of telomere integrity and meiosis. The MRN complex is involved in the repair of DNA double-strand breaks (DSBs) via homologous recombination (HR), an error-free mechanism which primarily occurs during S and G2 phases. The complex (1) mediates the end resection of damaged DNA, which generates proper single-stranded DNA, a key initial steps in HR, and is (2) required for the recruitment of other repair factors and efficient activation of ATM and ATR upon DNA damage. Within the MRN complex, MRE11 possesses both single-strand endonuclease activity and double-strand-specific 3'-5' exonuclease activity. MRE11 first endonucleolytically cleaves the 5' strand at DNA DSB ends to prevent non-homologous end joining (NHEJ) and licence HR. It then generates a single-stranded DNA gap via 3' to 5' exonucleolytic degradation, which is required for single-strand invasion and recombination. The polypeptide is Double-strand break repair protein MRE11 (Oryza sativa subsp. indica (Rice)).